The sequence spans 475 residues: Ribulose bisphosphate carboxylase large chain (475 aa).

A propeptide spanning residues 1 to 2 (MS) is cleaved from the precursor. Proline 3 is subject to N-acetylproline. Residue lysine 14 is modified to N6,N6,N6-trimethyllysine. Positions 123 and 173 each coordinate substrate. Lysine 175 (proton acceptor) is an active-site residue. Lysine 177 contributes to the substrate binding site. Mg(2+)-binding residues include lysine 201, aspartate 203, and glutamate 204. N6-carboxylysine is present on lysine 201. Residue histidine 294 is the Proton acceptor of the active site. Arginine 295, histidine 327, and serine 379 together coordinate substrate.

It belongs to the RuBisCO large chain family. Type I subfamily. As to quaternary structure, heterohexadecamer of 8 large chains and 8 small chains; disulfide-linked. The disulfide link is formed within the large subunit homodimers. It depends on Mg(2+) as a cofactor. In terms of processing, the disulfide bond which can form in the large chain dimeric partners within the hexadecamer appears to be associated with oxidative stress and protein turnover.

It is found in the plastid. Its subcellular location is the chloroplast. The enzyme catalyses 2 (2R)-3-phosphoglycerate + 2 H(+) = D-ribulose 1,5-bisphosphate + CO2 + H2O. The catalysed reaction is D-ribulose 1,5-bisphosphate + O2 = 2-phosphoglycolate + (2R)-3-phosphoglycerate + 2 H(+). Functionally, ruBisCO catalyzes two reactions: the carboxylation of D-ribulose 1,5-bisphosphate, the primary event in carbon dioxide fixation, as well as the oxidative fragmentation of the pentose substrate in the photorespiration process. Both reactions occur simultaneously and in competition at the same active site. This is Ribulose bisphosphate carboxylase large chain from Atriplex rosea (Red orache).